Consider the following 372-residue polypeptide: Cytochrome b (372 aa).

4 helical membrane-spanning segments follow: residues 25-45, 69-90, 105-125, and 170-190; these read FGSMLLTCLMLQITTGFFLAI, WIMQNLHAISASMFFICIYIHI, WLSGTALLITLMATAFFGYVL, and FFALHFILPFAIMALSSIHII. His-75 and His-89 together coordinate heme b. 2 residues coordinate heme b: His-174 and His-188. A ubiquinone is bound at residue His-193. 4 consecutive transmembrane segments (helical) span residues 218–238, 280–300, 312–332, and 339–358; these read YKDMLMFTSMITLLFITLSFS, LGGALALLMSVMILTTVPFTH, LSQILFWTLMATFITITWTAS, and FISISQTTSIFYFSFFITIP.

The protein belongs to the cytochrome b family. In terms of assembly, the cytochrome bc1 complex contains 3 respiratory subunits (MT-CYB, CYC1 and UQCRFS1), 2 core proteins (UQCRC1 and UQCRC2) and probably 6 low-molecular weight proteins. The cofactor is heme b.

The protein localises to the mitochondrion inner membrane. In terms of biological role, component of the ubiquinol-cytochrome c reductase complex (complex III or cytochrome b-c1 complex) that is part of the mitochondrial respiratory chain. The b-c1 complex mediates electron transfer from ubiquinol to cytochrome c. Contributes to the generation of a proton gradient across the mitochondrial membrane that is then used for ATP synthesis. The sequence is that of Cytochrome b (MT-CYB) from Naja annulata annulata (Banded water cobra).